Here is a 242-residue protein sequence, read N- to C-terminus: 1-(5-phosphoribosyl)-5-[(5-phosphoribosylamino)methylideneamino] imidazole-4-carboxamide isomerase (242 aa).

Asp8 acts as the Proton acceptor in catalysis. Asp130 functions as the Proton donor in the catalytic mechanism.

This sequence belongs to the HisA/HisF family.

The protein resides in the cytoplasm. The catalysed reaction is 1-(5-phospho-beta-D-ribosyl)-5-[(5-phospho-beta-D-ribosylamino)methylideneamino]imidazole-4-carboxamide = 5-[(5-phospho-1-deoxy-D-ribulos-1-ylimino)methylamino]-1-(5-phospho-beta-D-ribosyl)imidazole-4-carboxamide. It participates in amino-acid biosynthesis; L-histidine biosynthesis; L-histidine from 5-phospho-alpha-D-ribose 1-diphosphate: step 4/9. This chain is 1-(5-phosphoribosyl)-5-[(5-phosphoribosylamino)methylideneamino] imidazole-4-carboxamide isomerase, found in Thioalkalivibrio sulfidiphilus (strain HL-EbGR7).